Reading from the N-terminus, the 609-residue chain is ATP-dependent lipid A-core flippase (609 aa).

A run of 6 helical transmembrane segments spans residues 47-67 (LLAAIGSIFFSAADASMIYLI), 88-108 (ILMLMGVGMVGLLALRSVGSF), 167-187 (AIITVVQDGTFVIGLIVVMFV), 190-210 (WQLSLFLIVVGPFLGLFISII), 279-299 (VIQIIASLVLAFSLFTIAIFG), and 305-325 (GSSWLTAGSFASFFAAAAAIL). Residues 47–340 (LLAAIGSIFF…LTKVNVVIQK (294 aa)) form the ABC transmembrane type-1 domain. Residues 372 to 606 (VTIKDLSFAF…GGLYTRLYQS (235 aa)) enclose the ABC transporter domain. 404 to 411 (GKSGSGKT) is a binding site for ATP.

Belongs to the ABC transporter superfamily. Lipid exporter (TC 3.A.1.106) family. In terms of assembly, homodimer.

It is found in the cell inner membrane. The enzyme catalyses ATP + H2O + lipid A-core oligosaccharideSide 1 = ADP + phosphate + lipid A-core oligosaccharideSide 2.. Functionally, involved in lipopolysaccharide (LPS) biosynthesis. Translocates lipid A-core from the inner to the outer leaflet of the inner membrane. Transmembrane domains (TMD) form a pore in the inner membrane and the ATP-binding domain (NBD) is responsible for energy generation. This Francisella tularensis subsp. holarctica (strain LVS) protein is ATP-dependent lipid A-core flippase.